The sequence spans 281 residues: NADH-quinone oxidoreductase subunit B (281 aa).

Residues Cys-37, Cys-38, Cys-103, and Cys-132 each contribute to the [4Fe-4S] cluster site. A disordered region spans residues 242-281 (DAKPLDESRAHGPGPTTADIADAADTADSDAAPGATHDTP). Residues 257-281 (TTADIADAADTADSDAAPGATHDTP) show a composition bias toward low complexity.

It belongs to the complex I 20 kDa subunit family. In terms of assembly, NDH-1 is composed of 14 different subunits. Subunits NuoB, C, D, E, F, and G constitute the peripheral sector of the complex. Requires [4Fe-4S] cluster as cofactor.

The protein resides in the cell membrane. It catalyses the reaction a quinone + NADH + 5 H(+)(in) = a quinol + NAD(+) + 4 H(+)(out). In terms of biological role, NDH-1 shuttles electrons from NADH, via FMN and iron-sulfur (Fe-S) centers, to quinones in the respiratory chain. The immediate electron acceptor for the enzyme in this species is believed to be a menaquinone. Couples the redox reaction to proton translocation (for every two electrons transferred, four hydrogen ions are translocated across the cytoplasmic membrane), and thus conserves the redox energy in a proton gradient. The polypeptide is NADH-quinone oxidoreductase subunit B (Frankia alni (strain DSM 45986 / CECT 9034 / ACN14a)).